The chain runs to 344 residues: MQNLWKNALDTLSPYISNLFDNDVVCINNERYRIQKLLGEGGFAFVYLVQNVSNEKLYALKKIKCSFGNKGIKKAMKEADYHRKFKSNYLLKSYTHQLVKEADGSEFVYILFPYFAKGSVAQVIRNCDIEGSYISEKRILVWCSCLCKALQYLHENVAGDSPKQPEVNDLIMFDEPQVPQNTSNNNLVSYIHGDIKPDNLLLHENSREIVLTDFGSICLVPIFASNNSEAIAIQDKASENCTMPFRAPELFHVKAGSTITEKADIWSFGCTLYTIMFHASPFEREVSQGGSLALAVCNAQYSFPRKHPYSTLLCEIVEACLQREPNKRPSARELLSKIDLQINQ.

ATP-binding positions include 38 to 46 (LGEGGFAFV) and Lys61. The region spanning 76–344 (MKEADYHRKF…LSKIDLQINQ (269 aa)) is the Protein kinase domain. His192 serves as the catalytic Proton acceptor.

It belongs to the protein kinase superfamily. Ser/Thr protein kinase family.

The protein localises to the endoplasmic reticulum. It is found in the golgi apparatus. The catalysed reaction is L-seryl-[protein] + ATP = O-phospho-L-seryl-[protein] + ADP + H(+). It carries out the reaction L-threonyl-[protein] + ATP = O-phospho-L-threonyl-[protein] + ADP + H(+). The polypeptide is Serine/threonine-protein kinase ppk13 (ppk13) (Schizosaccharomyces pombe (strain 972 / ATCC 24843) (Fission yeast)).